The primary structure comprises 142 residues: HTH-type transcriptional regulator MntR (142 aa).

The HTH dtxR-type domain occupies 1–63 (MPTPSMEDYI…YEKYRGLVLT (63 aa)). Mn(2+) is bound by residues Asp8, Glu11, His77, Glu99, Glu102, and His103.

It belongs to the DtxR/MntR family. In terms of assembly, homodimer.

Its subcellular location is the cytoplasm. With respect to regulation, DNA binding is strongly activated by Mn(2+). Functionally, central regulator of manganese homeostasis. The sequence is that of HTH-type transcriptional regulator MntR from Bacillus cereus (strain G9842).